Reading from the N-terminus, the 187-residue chain is Pre-mRNA-splicing factor cwf7 (187 aa).

The protein belongs to the SPF27 family. Belongs to the 40S cdc5-associated complex (or cwf complex), a spliceosome sub-complex reminiscent of a late-stage spliceosome composed of the U2, U5 and U6 snRNAs and at least brr2, cdc5, cwf2/prp3, cwf3/syf1, cwf4/syf3, cwf5/ecm2, spp42/cwf6, cwf7/spf27, cwf8, cwf9, cwf10, cwf11, cwf12, prp45/cwf13, cwf14, cwf15, cwf16, cwf17, cwf18, cwf19, cwf20, cwf21, cwf22, cwf23, cwf24, cwf25, cwf26, cyp7/cwf27, cwf28, cwf29/ist3, lea1, msl1, prp5/cwf1, prp10, prp12/sap130, prp17, prp22, sap61, sap62, sap114, sap145, slu7, smb1, smd1, smd3, smf1, smg1 and syf2.

The protein resides in the nucleus. In terms of biological role, involved in mRNA splicing. This Schizosaccharomyces pombe (strain 972 / ATCC 24843) (Fission yeast) protein is Pre-mRNA-splicing factor cwf7 (cwf7).